A 318-amino-acid chain; its full sequence is Olfactory receptor 2T3 (318 aa).

Residues 1-30 are Extracellular-facing; sequence MCSGNQTSQNQTASTDFTLTGLFAESKHAA. N-linked (GlcNAc...) asparagine glycosylation is found at Asn-5 and Asn-10. A helical membrane pass occupies residues 31–54; that stretch reads LLYTVTFLLFLMALTGNALLILLI. Over 55 to 62 the chain is Cytoplasmic; the sequence is HSEPRLHT. A helical transmembrane segment spans residues 63–84; it reads PMYFFISQLALMDLMYLCVTVP. At 85–105 the chain is on the extracellular side; that stretch reads KMLVGQVTGDDTISPSGCGIQ. A disulfide bond links Cys-102 and Cys-194. The chain crosses the membrane as a helical span at residues 106-125; the sequence is MFFYLTLAGAEVFLLAAMAY. Residues 126–144 lie on the Cytoplasmic side of the membrane; that stretch reads DRYAAVCRPLHYPLLMNQR. A helical membrane pass occupies residues 145 to 163; the sequence is VCQLLVSACWVLGMVDGLL. Residues 164-200 are Extracellular-facing; sequence LTPITMSFPFCQSRKILSFFCETPALLKLSCSDVSLY. Residues 201-224 traverse the membrane as a helical segment; sequence KTLMYLCCILMLLAPIMVISSSYT. Residues 225 to 241 are Cytoplasmic-facing; sequence LILHLIHRMNSAAGHRK. Residues 242–264 form a helical membrane-spanning segment; that stretch reads ALATCSSHMIIVLLLFGASFYTY. The Extracellular segment spans residues 265 to 277; the sequence is MLPSSYHTAEQDM. Residues 278–297 form a helical membrane-spanning segment; the sequence is MVSAFYTIFTPVLNPLIYSL. The Cytoplasmic segment spans residues 298 to 318; it reads RNKDVTRALRSMMQSRMNQEK.

The protein belongs to the G-protein coupled receptor 1 family.

The protein resides in the cell membrane. Odorant receptor. The protein is Olfactory receptor 2T3 (OR2T3) of Homo sapiens (Human).